The chain runs to 107 residues: Nucleoid-associated protein Pnec_0645 (107 aa).

It belongs to the YbaB/EbfC family. Homodimer.

The protein localises to the cytoplasm. The protein resides in the nucleoid. Its function is as follows. Binds to DNA and alters its conformation. May be involved in regulation of gene expression, nucleoid organization and DNA protection. The protein is Nucleoid-associated protein Pnec_0645 of Polynucleobacter necessarius subsp. necessarius (strain STIR1).